A 232-amino-acid polypeptide reads, in one-letter code: MSNVDHAEIAKFEALAHRWWDRESEFKPLHDINPLRVNWIDERVNLAGKKVLDVGCGGGILSEAMAQRGATVTGIDMGEAPLAVAQLHQLESGVNVEYRQITAEALAEEMPEQFDVVTCLEMLEHVPDPSSVIRACFRMVKPGGQVFFSTINRNPKAYLFAIVGAEYIMKLLPRGTHDFKKFIRPSELGAWSRMAGLTVKDIIGLTYNPLTKHYKLAADVDVNYMIQTLREE.

S-adenosyl-L-methionine contacts are provided by Arg36, Gly55, Asp76, and Leu120.

It belongs to the methyltransferase superfamily. UbiG/COQ3 family.

It catalyses the reaction a 3-demethylubiquinol + S-adenosyl-L-methionine = a ubiquinol + S-adenosyl-L-homocysteine + H(+). It carries out the reaction a 3-(all-trans-polyprenyl)benzene-1,2-diol + S-adenosyl-L-methionine = a 2-methoxy-6-(all-trans-polyprenyl)phenol + S-adenosyl-L-homocysteine + H(+). It participates in cofactor biosynthesis; ubiquinone biosynthesis. Its function is as follows. O-methyltransferase that catalyzes the 2 O-methylation steps in the ubiquinone biosynthetic pathway. This Pseudomonas fluorescens (strain Pf0-1) protein is Ubiquinone biosynthesis O-methyltransferase.